A 297-amino-acid polypeptide reads, in one-letter code: tRNA pseudouridine synthase B (297 aa).

The active-site Nucleophile is the Asp44.

The protein belongs to the pseudouridine synthase TruB family. Type 1 subfamily.

It catalyses the reaction uridine(55) in tRNA = pseudouridine(55) in tRNA. In terms of biological role, responsible for synthesis of pseudouridine from uracil-55 in the psi GC loop of transfer RNAs. In Corynebacterium glutamicum (strain ATCC 13032 / DSM 20300 / JCM 1318 / BCRC 11384 / CCUG 27702 / LMG 3730 / NBRC 12168 / NCIMB 10025 / NRRL B-2784 / 534), this protein is tRNA pseudouridine synthase B.